The following is a 107-amino-acid chain: Probable 4-amino-4-deoxy-L-arabinose-phosphoundecaprenol flippase subunit ArnE (107 aa).

The EamA domain occupies 31 to 105; sequence RVWGWLALSL…IIVGIILLGG (75 aa). 3 consecutive transmembrane segments (helical) span residues 34 to 54, 57 to 77, and 85 to 105; these read GWLA…LFVL, VPVS…TLAA, and IALR…LLGG.

It belongs to the ArnE family. In terms of assembly, heterodimer of ArnE and ArnF.

It is found in the cell inner membrane. The protein operates within bacterial outer membrane biogenesis; lipopolysaccharide biosynthesis. In terms of biological role, translocates 4-amino-4-deoxy-L-arabinose-phosphoundecaprenol (alpha-L-Ara4N-phosphoundecaprenol) from the cytoplasmic to the periplasmic side of the inner membrane. This is Probable 4-amino-4-deoxy-L-arabinose-phosphoundecaprenol flippase subunit ArnE from Enterobacter sp. (strain 638).